The sequence spans 178 residues: ATP synthase subunit delta (178 aa).

This sequence belongs to the ATPase delta chain family. As to quaternary structure, F-type ATPases have 2 components, F(1) - the catalytic core - and F(0) - the membrane proton channel. F(1) has five subunits: alpha(3), beta(3), gamma(1), delta(1), epsilon(1). F(0) has three main subunits: a(1), b(2) and c(10-14). The alpha and beta chains form an alternating ring which encloses part of the gamma chain. F(1) is attached to F(0) by a central stalk formed by the gamma and epsilon chains, while a peripheral stalk is formed by the delta and b chains.

Its subcellular location is the cell membrane. Its function is as follows. F(1)F(0) ATP synthase produces ATP from ADP in the presence of a proton or sodium gradient. F-type ATPases consist of two structural domains, F(1) containing the extramembraneous catalytic core and F(0) containing the membrane proton channel, linked together by a central stalk and a peripheral stalk. During catalysis, ATP synthesis in the catalytic domain of F(1) is coupled via a rotary mechanism of the central stalk subunits to proton translocation. This protein is part of the stalk that links CF(0) to CF(1). It either transmits conformational changes from CF(0) to CF(1) or is implicated in proton conduction. The protein is ATP synthase subunit delta of Buchnera aphidicola subsp. Baizongia pistaciae (strain Bp).